We begin with the raw amino-acid sequence, 605 residues long: Progranulin (605 aa).

Positions 1–17 are cleaved as a signal peptide; it reads MWTLVGWTILVAGLVAG. 2 disulfide bridges follow: C126/C139 and C133/C149. N197 is a glycosylation site (N-linked (GlcNAc...) asparagine). Disulfide bonds link C297-C309, C303-C319, C310-C327, C320-C334, C328-C341, and C335-C348. The tract at residues 359–386 is disordered; it reads QKTPAQPSRPSQPSPPGPPGPPSPPGPL. Pro residues predominate over residues 368–385; the sequence is PSQPSPPGPPGPPSPPGP. Cystine bridges form between C392/C404 and C398/C414.

Belongs to the granulin family. In terms of assembly, progranulin is secreted as a homodimer. Interacts with SLPI; interaction protects progranulin from proteolysis. Interacts (via region corresponding to granulin-7 peptide) with CTSD; stabilizes CTSD and increases its proteolytic activity. Interacts (via region corresponding to granulin-7 peptide) with SORT1; this interaction mediates endocytosis and lysosome delivery of progranulin; interaction occurs at the neuronal cell surface in a stressed nervous system. Interacts with PSAP; facilitates lysosomal delivery of progranulin from the extracellular space and the biosynthetic pathway. Forms a complex with PSAP and M6PR; PSAP bridges the binding between progranulin and M6PR. Forms a complex with PSAP and SORT1; progranulin bridges the interaction between PSAP and SORT1; facilitates lysosomal targeting of PSAP via SORT1; interaction enhances PSAP uptake in primary cortical neurons. Interacts (via regions corresponding to granulin-2 and granulin-7 peptides) with GBA1; this interaction prevents aggregation of GBA1-SCARB2 complex via interaction with HSPA1A upon stress. Interacts (via region corresponding to granulin-7 peptide) with HSPA1A; mediates recruitment of HSPA1A to GBA1 and prevents GBA1 aggregation in response to stress. Cleaved by ELANE; proteolysis is blocked by SLPI and is concentration- and time-dependent and induces CXCL8/IL-8 production; granulin-3 and granulin-4 are resistant to ELANE. Cleaved by CTSL in lysosome thus regulating the maturation and turnover of progranulin within the lysosome.

The protein resides in the secreted. It is found in the lysosome. Its function is as follows. Secreted protein that acts as a key regulator of lysosomal function and as a growth factor involved in inflammation, wound healing and cell proliferation. Regulates protein trafficking to lysosomes, and also the activity of lysosomal enzymes. Also facilitates the acidification of lysosomes, causing degradation of mature CTSD by CTSB. In addition, functions as a wound-related growth factor that acts directly on dermal fibroblasts and endothelial cells to promote division, migration and the formation of capillary-like tubule structures. Also promotes epithelial cell proliferation by blocking TNF-mediated neutrophil activation preventing release of oxidants and proteases. Moreover, modulates inflammation in neurons by preserving neurons survival, axonal outgrowth and neuronal integrity. Functionally, inhibits epithelial cell proliferation and induces epithelial cells to secrete IL-8. Stabilizes CTSD through interaction with CTSD leading to maintain its aspartic-type peptidase activity. This Cavia porcellus (Guinea pig) protein is Progranulin (GRN).